The following is a 285-amino-acid chain: Phosphatidylglycerol--prolipoprotein diacylglyceryl transferase (285 aa).

The next 4 membrane-spanning stretches (helical) occupy residues L30 to I50, L67 to Y87, W103 to V123, and V129 to G149. R150 contributes to the a 1,2-diacyl-sn-glycero-3-phospho-(1'-sn-glycerol) binding site. Transmembrane regions (helical) follow at residues S184 to A204, F213 to F233, and G252 to L272.

Belongs to the Lgt family.

It is found in the cell inner membrane. The enzyme catalyses L-cysteinyl-[prolipoprotein] + a 1,2-diacyl-sn-glycero-3-phospho-(1'-sn-glycerol) = an S-1,2-diacyl-sn-glyceryl-L-cysteinyl-[prolipoprotein] + sn-glycerol 1-phosphate + H(+). Its pathway is protein modification; lipoprotein biosynthesis (diacylglyceryl transfer). Functionally, catalyzes the transfer of the diacylglyceryl group from phosphatidylglycerol to the sulfhydryl group of the N-terminal cysteine of a prolipoprotein, the first step in the formation of mature lipoproteins. In Anaplasma marginale (strain Florida), this protein is Phosphatidylglycerol--prolipoprotein diacylglyceryl transferase.